The sequence spans 179 residues: Photosystem I assembly protein Ycf4 (179 aa).

2 consecutive transmembrane segments (helical) span residues 21–41 and 59–79; these read LISFSGGIGFLLAGLSSYLGV and IVMTFYGTIGILLSLFLLLNI.

This sequence belongs to the Ycf4 family.

The protein resides in the plastid. Its subcellular location is the chloroplast thylakoid membrane. Its function is as follows. Seems to be required for the assembly of the photosystem I complex. This is Photosystem I assembly protein Ycf4 from Rhodomonas salina (Cryptomonas salina).